Here is a 60-residue protein sequence, read N- to C-terminus: Small ribosomal subunit protein eS17 (60 aa).

The protein belongs to the eukaryotic ribosomal protein eS17 family.

This is Small ribosomal subunit protein eS17 from Methanosphaera stadtmanae (strain ATCC 43021 / DSM 3091 / JCM 11832 / MCB-3).